A 766-amino-acid chain; its full sequence is 5-methyltetrahydropteroyltriglutamate--homocysteine methyltransferase (766 aa).

Residues Arg23 to Lys26 and Lys121 each bind 5-methyltetrahydropteroyltri-L-glutamate. L-homocysteine is bound by residues Ile438 to Ser440 and Glu491. L-methionine is bound by residues Ile438–Ser440 and Glu491. Residues Arg522 to Cys523 and Trp568 each bind 5-methyltetrahydropteroyltri-L-glutamate. Asp606 is an L-homocysteine binding site. Asp606 contributes to the L-methionine binding site. Glu612 is a binding site for 5-methyltetrahydropteroyltri-L-glutamate. Zn(2+) is bound by residues His648, Cys650, and Glu672. The Proton donor role is filled by His701. Cys733 serves as a coordination point for Zn(2+).

This sequence belongs to the vitamin-B12 independent methionine synthase family. Zn(2+) serves as cofactor.

It carries out the reaction 5-methyltetrahydropteroyltri-L-glutamate + L-homocysteine = tetrahydropteroyltri-L-glutamate + L-methionine. It participates in amino-acid biosynthesis; L-methionine biosynthesis via de novo pathway; L-methionine from L-homocysteine (MetE route): step 1/1. In terms of biological role, catalyzes the transfer of a methyl group from 5-methyltetrahydrofolate to homocysteine resulting in methionine formation. The chain is 5-methyltetrahydropteroyltriglutamate--homocysteine methyltransferase from Photobacterium profundum (strain SS9).